A 255-amino-acid polypeptide reads, in one-letter code: DNA repair protein RecO (255 aa).

The protein belongs to the RecO family.

Its function is as follows. Involved in DNA repair and RecF pathway recombination. This is DNA repair protein RecO from Listeria welshimeri serovar 6b (strain ATCC 35897 / DSM 20650 / CCUG 15529 / CIP 8149 / NCTC 11857 / SLCC 5334 / V8).